A 203-amino-acid chain; its full sequence is uncharacterized protein (203 aa).

This is an uncharacterized protein from Archaeoglobus fulgidus (strain ATCC 49558 / DSM 4304 / JCM 9628 / NBRC 100126 / VC-16).